Here is a 384-residue protein sequence, read N- to C-terminus: Putative aminohydrolase MTH_994 (384 aa).

Residues histidine 60, histidine 62, histidine 207, and aspartate 291 each coordinate Zn(2+).

This sequence belongs to the metallo-dependent hydrolases superfamily. ATZ/TRZ family.

This chain is Putative aminohydrolase MTH_994, found in Methanothermobacter thermautotrophicus (strain ATCC 29096 / DSM 1053 / JCM 10044 / NBRC 100330 / Delta H) (Methanobacterium thermoautotrophicum).